Here is a 353-residue protein sequence, read N- to C-terminus: Histidinol-phosphate aminotransferase (353 aa).

At Lys214 the chain carries N6-(pyridoxal phosphate)lysine.

The protein belongs to the class-II pyridoxal-phosphate-dependent aminotransferase family. Histidinol-phosphate aminotransferase subfamily. In terms of assembly, homodimer. It depends on pyridoxal 5'-phosphate as a cofactor.

The enzyme catalyses L-histidinol phosphate + 2-oxoglutarate = 3-(imidazol-4-yl)-2-oxopropyl phosphate + L-glutamate. It participates in amino-acid biosynthesis; L-histidine biosynthesis; L-histidine from 5-phospho-alpha-D-ribose 1-diphosphate: step 7/9. This Gloeobacter violaceus (strain ATCC 29082 / PCC 7421) protein is Histidinol-phosphate aminotransferase.